Here is a 63-residue protein sequence, read N- to C-terminus: Large ribosomal subunit protein bL28 (63 aa).

It belongs to the bacterial ribosomal protein bL28 family.

The protein is Large ribosomal subunit protein bL28 of Dictyoglomus thermophilum (strain ATCC 35947 / DSM 3960 / H-6-12).